We begin with the raw amino-acid sequence, 252 residues long: Isoprenyl transferase (252 aa).

The active site involves D32. D32 lines the Mg(2+) pocket. Substrate contacts are provided by residues 33–36, W37, R45, H49, and 77–79; these read GNGR and STE. Residue N80 is the Proton acceptor of the active site. Substrate is bound by residues W81, R83, R200, and 206 to 208; that span reads RLS. E219 provides a ligand contact to Mg(2+).

Belongs to the UPP synthase family. As to quaternary structure, homodimer. It depends on Mg(2+) as a cofactor.

Catalyzes the condensation of isopentenyl diphosphate (IPP) with allylic pyrophosphates generating different type of terpenoids. The chain is Isoprenyl transferase from Listeria monocytogenes serovar 1/2a (strain ATCC BAA-679 / EGD-e).